Here is a 1252-residue protein sequence, read N- to C-terminus: Plasma membrane calcium-transporting ATPase mca-1 (1252 aa).

Residues 1–121 are Cytoplasmic-facing; it reads MQKSQNVTAV…VRLVLDACKD (121 aa). A helical transmembrane segment spans residues 122–142; sequence PTLVILVLSGFINLALSFYEP. Topologically, residues 143–180 are extracellular; that stretch reads TSAAEDATQHLVNATTAAILANGTFMSTTEAPSEGHGT. N-linked (GlcNAc...) asparagine glycans are attached at residues Asn155 and Asn164. A helical transmembrane segment spans residues 181–201; that stretch reads AWIEGVAILLCVIVVVLVTAV. The Cytoplasmic segment spans residues 202 to 376; that stretch reads NDYSKERQFR…KSVLQAKLSK (175 aa). A disordered region spans residues 330–361; it reads DDSTSTSSSSSSSSSSSGSSSNGSSDSSKSGD. Residues 333–357 are compositionally biased toward low complexity; the sequence is TSTSSSSSSSSSSSGSSSNGSSDSS. A helical transmembrane segment spans residues 377-397; it reads LALQIIYCGTTIAIIALIVLV. Over 398–422 the chain is Extracellular; the sequence is TRFCLDHYVFEKNEFSLVDIQMFVK. Residues 423–443 traverse the membrane as a helical segment; sequence FFIIAVTILVISIPEGLPLAI. Positions 432, 435, and 437 each coordinate Ca(2+). Residues 444-879 are Cytoplasmic-facing; that stretch reads ALALTYSVRK…GRNVYDSISK (436 aa). Catalysis depends on Asp479, which acts as the 4-aspartylphosphate intermediate. Mg(2+) is bound by residues Asp479 and Thr481. Positions 481, 553, 612, 733, 734, 735, 792, and 798 each coordinate ATP. Residue Asp822 participates in Mg(2+) binding. Position 825 (Asn825) interacts with ATP. A helical transmembrane segment spans residues 880 to 900; it reads FLQFQLTVNVVAVITAFVGAV. A Ca(2+)-binding site is contributed by Asn888. The Extracellular portion of the chain corresponds to 901–908; that stretch reads TVSDSPLK. A helical membrane pass occupies residues 909-929; sequence AVHMLWINLIMDTLASLALAT. Asn916 and Asp920 together coordinate Ca(2+). At 930-960 the chain is on the cytoplasmic side; that stretch reads EQPTDELLERKPYGRKKSLISRTMVKNILCH. Residues 961–981 traverse the membrane as a helical segment; sequence ALYQLIIIFVIFFYGDTIFGI. Over 982–989 the chain is Extracellular; it reads KTGLYAPL. A helical transmembrane segment spans residues 990-1010; it reads FAPPSQHFTLVFNAFVMMTVF. At 1011-1035 the chain is on the cytoplasmic side; that stretch reads NEINARKVHGERNVFKGLASNRVFC. A helical membrane pass occupies residues 1036 to 1056; the sequence is VIWVTTFIAQIIIVQFGGAWF. At 1057-1065 the chain is on the extracellular side; the sequence is STAPLTLQQ. A helical transmembrane segment spans residues 1066-1086; that stretch reads WIVCLVLGFSTLIWGQIVATI. Topologically, residues 1087–1252 are cytoplasmic; sequence PSKKLPKAWK…NVDMEDIELN (166 aa). Positions 1124–1142 are calmodulin-binding subdomain A; it reads LRRSGKSLWVRGMFIIGNH. The segment at 1143–1152 is calmodulin-binding subdomain B; that stretch reads LRVLRAFGME. A disordered region spans residues 1181-1252; that stretch reads YRHQKHQEKK…NVDMEDIELN (72 aa).

Belongs to the cation transport ATPase (P-type) (TC 3.A.3) family. Type IIB subfamily. Interacts with calmodulin.

It localises to the cell membrane. The enzyme catalyses Ca(2+)(in) + ATP + H2O = Ca(2+)(out) + ADP + phosphate + H(+). Its function is as follows. Catalyzes the hydrolysis of ATP coupled with the transport of calcium across a membrane. The sequence is that of Plasma membrane calcium-transporting ATPase mca-1 from Caenorhabditis elegans.